The sequence spans 336 residues: Meiotically up-regulated gene 33 protein (336 aa).

The tract at residues 232 to 336 (ISEDDGLKRG…KPSRFSWGRS (105 aa)) is disordered. The segment covering 250-262 (TFSNDSRSLSSYA) has biased composition (polar residues).

Its subcellular location is the cytoplasm. Functionally, has a role in meiosis. In Schizosaccharomyces pombe (strain 972 / ATCC 24843) (Fission yeast), this protein is Meiotically up-regulated gene 33 protein (mug33).